We begin with the raw amino-acid sequence, 333 residues long: Forkhead box protein unc-130 (333 aa).

The tract at residues 1-126 (MLFSMESILS…MSGHRKSSHA (126 aa)) is disordered. The segment covering 14–24 (PKLEPPPKLEP) has biased composition (basic and acidic residues). Residues 37 to 50 (RSNTRLSEPSTSAS) are compositionally biased toward polar residues. Basic and acidic residues predominate over residues 52–62 (LEHDLKFGESR). Residues 98–110 (SSDDAKDDDDDDD) show a composition bias toward acidic residues. The segment at residues 127–221 (KPPYSYIALI…DNGSFLRRRK (95 aa)) is a DNA-binding region (fork-head). Residues 304–333 (APVSSGQKRTSSSSSPNENGSSAVSDKLSA) form a disordered region. Over residues 307 to 333 (SSGQKRTSSSSSPNENGSSAVSDKLSA) the composition is skewed to low complexity.

As to expression, expressed in ventral body wall muscle. Expressed in the structural cells and two neurons of each ray in the male tail.

The protein localises to the nucleus. Its function is as follows. Probable transcription factor. Binds to DNA sequence motif 5'-CTGTTTCA-3'. Required for the migration of distal tip cells (DTC) and axonal growth-cones along the dorsal-ventral axis of the body wall, acting by cell autonomous repression of unc-129/TGF-beta expression in ventral body muscle during embyogenesis. Binds to the promoter region of the unc-129 gene. Plays a role in dorsal-ventral patterning and fate specification of the postembryonic mesoderm. Involved in male tail morphogenesis and in embryogenesis. Plays a role in the development of sensory neurons and is required to repress AWA fate and promote ASG fate in the ASG chemosensory neurons. Regulates expression of a class of small RNAs, known as 21U-RNAs. The protein is Forkhead box protein unc-130 of Caenorhabditis elegans.